Here is a 108-residue protein sequence, read N- to C-terminus: uncharacterized protein (108 aa).

The tract at residues 1–23 is disordered; the sequence is MVDELEKNQVQPQETEENKENAL.

This is an uncharacterized protein from Ureaplasma parvum serovar 3 (strain ATCC 700970).